Reading from the N-terminus, the 160-residue chain is Endoribonuclease YbeY (160 aa).

Residues His-124, His-128, and His-134 each contribute to the Zn(2+) site.

The protein belongs to the endoribonuclease YbeY family. It depends on Zn(2+) as a cofactor.

It is found in the cytoplasm. In terms of biological role, single strand-specific metallo-endoribonuclease involved in late-stage 70S ribosome quality control and in maturation of the 3' terminus of the 16S rRNA. This Jannaschia sp. (strain CCS1) protein is Endoribonuclease YbeY.